The primary structure comprises 207 residues: Superoxide dismutase [Mn] (207 aa).

Residues His-28, His-76, Asp-160, and His-164 each contribute to the Mn(2+) site.

It belongs to the iron/manganese superoxide dismutase family. Mn(2+) serves as cofactor.

It carries out the reaction 2 superoxide + 2 H(+) = H2O2 + O2. In terms of biological role, destroys superoxide anion radicals which are normally produced within the cells and which are toxic to biological systems. The chain is Superoxide dismutase [Mn] (sodA) from Mycobacterium lepraemurium.